A 254-amino-acid chain; its full sequence is Ribonuclease 3 (254 aa).

Positions 24–154 constitute an RNase III domain; it reads LRRLQETLGV…VIGALFLDSG (131 aa). Residue glutamate 67 coordinates Mg(2+). Aspartate 71 is an active-site residue. Positions 140 and 143 each coordinate Mg(2+). Glutamate 143 is an active-site residue. Residues 181–250 form the DRBM domain; sequence DYKSTLQVLA…ARLAWEQLSG (70 aa).

This sequence belongs to the ribonuclease III family. As to quaternary structure, homodimer. The cofactor is Mg(2+).

It localises to the cytoplasm. The catalysed reaction is Endonucleolytic cleavage to 5'-phosphomonoester.. In terms of biological role, digests double-stranded RNA. Involved in the processing of primary rRNA transcript to yield the immediate precursors to the large and small rRNAs (23S and 16S). Processes some mRNAs, and tRNAs when they are encoded in the rRNA operon. Processes pre-crRNA and tracrRNA of type II CRISPR loci if present in the organism. In Treponema pallidum (strain Nichols), this protein is Ribonuclease 3.